Consider the following 407-residue polypeptide: 1-deoxy-D-xylulose 5-phosphate reductoisomerase (407 aa).

NADPH is bound by residues Thr-27, Gly-28, Ser-29, Ile-30, Ala-53, Arg-54, Asn-55, and Asn-140. Position 141 (Lys-141) interacts with 1-deoxy-D-xylulose 5-phosphate. Position 142 (Glu-142) interacts with NADPH. Residue Asp-166 coordinates Mn(2+). Residues Ser-167, Glu-168, Ser-192, and His-215 each contribute to the 1-deoxy-D-xylulose 5-phosphate site. Residue Glu-168 participates in Mn(2+) binding. Gly-221 contributes to the NADPH binding site. Positions 228, 233, 234, and 237 each coordinate 1-deoxy-D-xylulose 5-phosphate. Glu-237 is a Mn(2+) binding site.

It belongs to the DXR family. Mg(2+) is required as a cofactor. It depends on Mn(2+) as a cofactor.

It catalyses the reaction 2-C-methyl-D-erythritol 4-phosphate + NADP(+) = 1-deoxy-D-xylulose 5-phosphate + NADPH + H(+). Its pathway is isoprenoid biosynthesis; isopentenyl diphosphate biosynthesis via DXP pathway; isopentenyl diphosphate from 1-deoxy-D-xylulose 5-phosphate: step 1/6. Its function is as follows. Catalyzes the NADPH-dependent rearrangement and reduction of 1-deoxy-D-xylulose-5-phosphate (DXP) to 2-C-methyl-D-erythritol 4-phosphate (MEP). In Oleidesulfovibrio alaskensis (strain ATCC BAA-1058 / DSM 17464 / G20) (Desulfovibrio alaskensis), this protein is 1-deoxy-D-xylulose 5-phosphate reductoisomerase.